The sequence spans 73 residues: Large ribosomal subunit protein bL31 (73 aa).

Residues cysteine 16, cysteine 18, cysteine 37, and cysteine 40 each coordinate Zn(2+).

Belongs to the bacterial ribosomal protein bL31 family. Type A subfamily. As to quaternary structure, part of the 50S ribosomal subunit. The cofactor is Zn(2+).

Its function is as follows. Binds the 23S rRNA. This Blochmanniella floridana protein is Large ribosomal subunit protein bL31.